A 441-amino-acid polypeptide reads, in one-letter code: Polycomb protein EED (441 aa).

Residues 1–72 are disordered; it reads MSEREVSTVP…PGRKSWGKGK (72 aa). Residue S2 is modified to N-acetylserine. Phosphoserine occurs at positions 2 and 34. The segment covering 45–61 has biased composition (polar residues); sequence ESGTNTERPDTPTNTPN. T55 carries the phosphothreonine modification. At K66 the chain carries N6,N6,N6-trimethyllysine; alternate. K66 carries the N6,N6-dimethyllysine; alternate modification. At K66 the chain carries N6-methyllysine; alternate. An interaction with EZH2 region spans residues 81 to 441; that stretch reads SFKCVNSLKE…ASIWRWDRLR (361 aa). WD repeat units lie at residues 91–134, 142–185, 188–228, and 234–275; these read DHNQ…EIRL, DADE…CIKH, GHGN…LVAI, and GHRD…NAIK. K197, K268, and K284 each carry N6,N6,N6-trimethyllysine; alternate. Residues K197, K268, and K284 each carry the N6,N6-dimethyllysine; alternate modification. K197, K268, and K284 each carry N6-methyllysine; alternate. WD repeat units follow at residues 304–341, 359–399, and 408–441; these read IHRN…DDID, SQCD…PHKA, and KCGA…DRLR.

This sequence belongs to the WD repeat ESC family. As to quaternary structure, component of the PRC2/EED-EZH2 complex, which includes EED, EZH2, SUZ12, RBBP4 and RBBP7 and possibly AEBP2. The minimum components required for methyltransferase activity of the PRC2/EED-EZH2 complex are EED, EZH2 and SUZ12. Component of the PRC2/EED-EZH1 complex, which includes EED, EZH1, SUZ12, RBBP4 and AEBP2. The PRC2 complex may also interact with DNMT1, DNMT3A, DNMT3B and PHF1 via the EZH2 subunit and with SIRT1 via the SUZ12 subunit. Interacts with HDAC, HDAC2, histone H1, KMT2A/MLL1 and YY1. May interact with ITGA4, ITGAE and ITGB7. Interacts with CDYL. Interacts with BMAL1. Post-translationally, methylated. Binding to histone H1 'Lys-26' promotes mono-, di-, and trimethylation of internal lysines.

Its subcellular location is the nucleus. Functionally, polycomb group (PcG) protein. Component of the PRC2/EED-EZH2 complex, which methylates 'Lys-9' and 'Lys-27' of histone H3, leading to transcriptional repression of the affected target gene. Also recognizes 'Lys-26' trimethylated histone H1 with the effect of inhibiting PRC2 complex methyltransferase activity on nucleosomal histone H3 'Lys-27', whereas H3 'Lys-27' recognition has the opposite effect, enabling the propagation of this repressive mark. The PRC2/EED-EZH2 complex may also serve as a recruiting platform for DNA methyltransferases, thereby linking two epigenetic repression systems. The chain is Polycomb protein EED (EED) from Bos taurus (Bovine).